A 212-amino-acid chain; its full sequence is ATP synthase F(0) complex subunit a (212 aa).

Helical transmembrane passes span 3–23, 58–78, 87–107, 128–148, 169–189, and 192–212; these read MMGI…IYTS, WAAM…LGLL, QLSM…LTGL, IPLL…ALGV, FVLL…LVLL, and LEIA…TLYL.

The protein belongs to the ATPase A chain family. Component of the ATP synthase complex composed at least of ATP5F1A/subunit alpha, ATP5F1B/subunit beta, ATP5MC1/subunit c (homooctomer), MT-ATP6/subunit a, MT-ATP8/subunit 8, ATP5ME/subunit e, ATP5MF/subunit f, ATP5MG/subunit g, ATP5MK/subunit k, ATP5MJ/subunit j, ATP5F1C/subunit gamma, ATP5F1D/subunit delta, ATP5F1E/subunit epsilon, ATP5PF/subunit F6, ATP5PB/subunit b, ATP5PD/subunit d, ATP5PO/subunit OSCP. ATP synthase complex consists of a soluble F(1) head domain (subunits alpha(3) and beta(3)) - the catalytic core - and a membrane F(0) domain - the membrane proton channel (subunits c, a, 8, e, f, g, k and j). These two domains are linked by a central stalk (subunits gamma, delta, and epsilon) rotating inside the F1 region and a stationary peripheral stalk (subunits F6, b, d, and OSCP). Interacts with DNAJC30; interaction is direct.

It localises to the mitochondrion inner membrane. The enzyme catalyses H(+)(in) = H(+)(out). Its function is as follows. Subunit a, of the mitochondrial membrane ATP synthase complex (F(1)F(0) ATP synthase or Complex V) that produces ATP from ADP in the presence of a proton gradient across the membrane which is generated by electron transport complexes of the respiratory chain. ATP synthase complex consist of a soluble F(1) head domain - the catalytic core - and a membrane F(1) domain - the membrane proton channel. These two domains are linked by a central stalk rotating inside the F(1) region and a stationary peripheral stalk. During catalysis, ATP synthesis in the catalytic domain of F(1) is coupled via a rotary mechanism of the central stalk subunits to proton translocation. With the subunit c (ATP5MC1), forms the proton-conducting channel in the F(0) domain, that contains two crucial half-channels (inlet and outlet) that facilitate proton movement from the mitochondrial intermembrane space (IMS) into the matrix. Protons are taken up via the inlet half-channel and released through the outlet half-channel, following a Grotthuss mechanism. This chain is ATP synthase F(0) complex subunit a, found in Tropidurus hispidus (Peters' lava lizard).